The primary structure comprises 495 residues: Probable cytosol aminopeptidase (495 aa).

Residues Lys-261 and Asp-266 each coordinate Mn(2+). Lys-273 is a catalytic residue. Mn(2+) is bound by residues Asp-284, Asp-343, and Glu-345. Arg-347 is a catalytic residue.

This sequence belongs to the peptidase M17 family. Mn(2+) is required as a cofactor.

The protein localises to the cytoplasm. It carries out the reaction Release of an N-terminal amino acid, Xaa-|-Yaa-, in which Xaa is preferably Leu, but may be other amino acids including Pro although not Arg or Lys, and Yaa may be Pro. Amino acid amides and methyl esters are also readily hydrolyzed, but rates on arylamides are exceedingly low.. The catalysed reaction is Release of an N-terminal amino acid, preferentially leucine, but not glutamic or aspartic acids.. In terms of biological role, presumably involved in the processing and regular turnover of intracellular proteins. Catalyzes the removal of unsubstituted N-terminal amino acids from various peptides. This Chelativorans sp. (strain BNC1) protein is Probable cytosol aminopeptidase.